The sequence spans 248 residues: Phosphoglycerate mutase (248 aa).

Residues 8-15 (RHGQSEWN), 21-22 (TG), Arg-60, 87-90 (ERHY), Lys-98, 114-115 (RR), and 183-184 (GN) contribute to the substrate site. His-9 (tele-phosphohistidine intermediate) is an active-site residue. The Proton donor/acceptor role is filled by Glu-87.

This sequence belongs to the phosphoglycerate mutase family. BPG-dependent PGAM subfamily.

The protein resides in the cytoplasm. The enzyme catalyses (2R)-2-phosphoglycerate = (2R)-3-phosphoglycerate. Its pathway is carbohydrate degradation; glycolysis; pyruvate from D-glyceraldehyde 3-phosphate: step 3/5. The protein is Phosphoglycerate mutase (GPM1) of Candida albicans (strain SC5314 / ATCC MYA-2876) (Yeast).